The primary structure comprises 678 residues: UvrABC system protein C (678 aa).

Residues 16–95 (VEPGVYRFRD…IKEFDPRFNI (80 aa)) form the GIY-YIG domain. The 36-residue stretch at 208–243 (DRLIREMEQQMNAAAEELDFERAARLRDNIGAMRRA) folds into the UVR domain. The interval 477-508 (HLRDAEAAPEGRPEQGPRASARPEQGPRASAR) is disordered. The span at 479–491 (RDAEAAPEGRPEQ) shows a compositional bias: basic and acidic residues.

Belongs to the UvrC family. As to quaternary structure, interacts with UvrB in an incision complex.

The protein localises to the cytoplasm. Functionally, the UvrABC repair system catalyzes the recognition and processing of DNA lesions. UvrC both incises the 5' and 3' sides of the lesion. The N-terminal half is responsible for the 3' incision and the C-terminal half is responsible for the 5' incision. The protein is UvrABC system protein C of Mycolicibacterium vanbaalenii (strain DSM 7251 / JCM 13017 / BCRC 16820 / KCTC 9966 / NRRL B-24157 / PYR-1) (Mycobacterium vanbaalenii).